A 627-amino-acid chain; its full sequence is 1-deoxy-D-xylulose-5-phosphate synthase (627 aa).

Thiamine diphosphate contacts are provided by residues H80 and 121 to 123 (GHS). Residue D152 participates in Mg(2+) binding. Thiamine diphosphate is bound by residues 153-154 (GA), N181, Y288, and E370. Residue N181 coordinates Mg(2+).

Belongs to the transketolase family. DXPS subfamily. Homodimer. The cofactor is Mg(2+). Thiamine diphosphate serves as cofactor.

The catalysed reaction is D-glyceraldehyde 3-phosphate + pyruvate + H(+) = 1-deoxy-D-xylulose 5-phosphate + CO2. The protein operates within metabolic intermediate biosynthesis; 1-deoxy-D-xylulose 5-phosphate biosynthesis; 1-deoxy-D-xylulose 5-phosphate from D-glyceraldehyde 3-phosphate and pyruvate: step 1/1. Its function is as follows. Catalyzes the acyloin condensation reaction between C atoms 2 and 3 of pyruvate and glyceraldehyde 3-phosphate to yield 1-deoxy-D-xylulose-5-phosphate (DXP). The sequence is that of 1-deoxy-D-xylulose-5-phosphate synthase from Aliivibrio salmonicida (strain LFI1238) (Vibrio salmonicida (strain LFI1238)).